The primary structure comprises 411 residues: Serine/threonine transporter SstT (411 aa).

The next 9 helical transmembrane spans lie at 14–34 (GSLVIQIIVGIVAGILLASVA), 43–63 (FLGGLFVSALKAVAPILVFIL), 82–102 (IIMLYLFGTLMAALTAVVMSF), 141–161 (ALMSGNFIGILAWAIALGFAL), 192–212 (IGIFGLVANTFAETGFAALAG), 218–238 (AVLLGSMAVIALVVNPAIVFF), 290–310 (IPLGATINMAGAAITITVLTL), 330–350 (VVAAVSACGASGVAGGSLLLI), and 357–377 (FGIPNEVAMQVVAVGFIIGVI).

The protein belongs to the dicarboxylate/amino acid:cation symporter (DAACS) (TC 2.A.23) family.

The protein localises to the cell inner membrane. The enzyme catalyses L-serine(in) + Na(+)(in) = L-serine(out) + Na(+)(out). It catalyses the reaction L-threonine(in) + Na(+)(in) = L-threonine(out) + Na(+)(out). Involved in the import of serine and threonine into the cell, with the concomitant import of sodium (symport system). The polypeptide is Serine/threonine transporter SstT (Photobacterium profundum (strain SS9)).